The chain runs to 504 residues: Amidophosphoribosyltransferase (504 aa).

The active-site Nucleophile is Cys2. One can recognise a Glutamine amidotransferase type-2 domain in the interval 2–235 (CGIVGIVSQS…PGEAIYVTFE (234 aa)). Residues Thr305, Asp367, and Asp368 each coordinate Mg(2+).

This sequence in the C-terminal section; belongs to the purine/pyrimidine phosphoribosyltransferase family. Requires Mg(2+) as cofactor.

The enzyme catalyses 5-phospho-beta-D-ribosylamine + L-glutamate + diphosphate = 5-phospho-alpha-D-ribose 1-diphosphate + L-glutamine + H2O. It functions in the pathway purine metabolism; IMP biosynthesis via de novo pathway; N(1)-(5-phospho-D-ribosyl)glycinamide from 5-phospho-alpha-D-ribose 1-diphosphate: step 1/2. Its function is as follows. Catalyzes the formation of phosphoribosylamine from phosphoribosylpyrophosphate (PRPP) and glutamine. The polypeptide is Amidophosphoribosyltransferase (Pasteurella multocida (strain Pm70)).